The primary structure comprises 752 residues: Glutamate carboxypeptidase 2 (752 aa).

Topologically, residues 1–19 (MWNAQQDSDSAEALGRRQR) are cytoplasmic. A Phosphoserine modification is found at S10. Residues 20–44 (WFCAGTLVLAFTGTFIIGFLFGWFI) form a helical; Signal-anchor for type II membrane protein membrane-spanning segment. At 45–752 (KPSNDSTSSV…AAAETLREVD (708 aa)) the chain is on the extracellular side. N-linked (GlcNAc...) asparagine glycosylation is found at N48, N78, N123, N155, and N197. Substrate is bound by residues R212 and N259. Ca(2+)-binding residues include T271 and Y274. Positions 276 to 589 (ANEYAYRHEF…QVRGAMVFEL (314 aa)) are NAALADase. N338 is a glycosylation site (N-linked (GlcNAc...) asparagine). 2 residues coordinate Zn(2+): H379 and D389. Substrate is bound at residue E426. E426 (nucleophile; for NAALADase activity) is an active-site residue. Residue E427 participates in Zn(2+) binding. Ca(2+)-binding residues include E435 and E438. D455 serves as a coordination point for Zn(2+). Residues N461 and N478 are each glycosylated (N-linked (GlcNAc...) asparagine). Substrate is bound by residues 519-520 (SG), N521, 536-538 (RAR), Y554, and 554-555 (YH). H555 is a Zn(2+) binding site. N-linked (GlcNAc...) asparagine glycosylation is present at N615. S630 functions as the Charge relay system in the catalytic mechanism. An N-linked (GlcNAc...) asparagine glycan is attached at N640. Active-site charge relay system residues include D668 and H691. Residue 701–702 (KY) participates in substrate binding.

Belongs to the peptidase M28 family. M28B subfamily. As to quaternary structure, homodimer. Zn(2+) serves as cofactor. As to expression, widely expressed throughout brain regions with highest levels in the hippocampus, dentate gyrus, priform cortex, choroid plexus of ventricles, pineal gland, anterior lobe of the pituitary gland and supraoptic nucleus. High levels also found in the cerebral cortex, substantia nigra, pontine nucleus and the granule cell layer of cerebellum. Highly expressed in astrocytes and non-myelinating Schwann cells. Also expressed in kidney, localizing to the proximal brush border of the renal tube.

The protein resides in the cell membrane. The enzyme catalyses Release of an unsubstituted, C-terminal glutamyl residue, typically from Ac-Asp-Glu or folylpoly-gamma-glutamates.. With respect to regulation, the NAALADase activity is inhibited by beta-NAAG, quisqualic acid and 2-(phosphonomethyl)glutaric acid (PMG). Its function is as follows. Has both folate hydrolase and N-acetylated-alpha-linked-acidic dipeptidase (NAALADase) activity. Has a preference for tri-alpha-glutamate peptides. In the intestine, required for the uptake of folate. In the brain, modulates excitatory neurotransmission through the hydrolysis of the neuropeptide, N-aceylaspartylglutamate (NAAG), thereby releasing glutamate. Functionally, also exhibits a dipeptidyl-peptidase IV type activity. In vitro, cleaves Gly-Pro-AMC. This chain is Glutamate carboxypeptidase 2 (Folh1), found in Rattus norvegicus (Rat).